The sequence spans 139 residues: Spermatogenesis-associated protein 33 (139 aa).

The tract at residues 1-67 (MVTHAAGART…TAKHPPPAAS (67 aa)) is interaction with ATG16L1. The disordered stretch occupies residues 1 to 83 (MVTHAAGART…VKQKSSRKKV (83 aa)). A compositionally biased stretch (basic and acidic residues) spans 25 to 50 (KSKEKLMEKHSQEARQADRESEKPVD). Residues 68–139 (LEEKPDVKQK…ADAYNSHLKE (72 aa)) form an interaction with VDAC2 region. The PQIIIT signature appears at 86-91 (PQIIIT). S94 carries the post-translational modification Phosphoserine. Polar residues predominate over residues 97-109 (TLVSCSSSGSDQQ). The disordered stretch occupies residues 97-139 (TLVSCSSSGSDQQRTIREPEDWGPYRRHRNPSTADAYNSHLKE). Over residues 110-120 (RTIREPEDWGP) the composition is skewed to basic and acidic residues.

Interacts (via PQIIIT motif) with PPP3R1, PPP3R2, PPP3CA, PPP3CB and PPP3CC. Interacts with VDAC2. Interacts with ATG16L1 (via WD repeats).

The protein localises to the cytoplasm. It localises to the cytosol. It is found in the nucleus. Its subcellular location is the mitochondrion. Plays an important role in sperm motility and male fertility. Required for sperm midpiece flexibility and for the localization of sperm calcineurin to the mitochondria. Promotes mitophagy as well as acts as an autophagy mediator in male germline cells. Links damaged mitochondria to autophagosomes via its binding to the outer mitochondrial membrane protein VDAC2, as well as to key autophagy machinery component ATG16L1. The protein is Spermatogenesis-associated protein 33 (SPATA33) of Homo sapiens (Human).